We begin with the raw amino-acid sequence, 696 residues long: C2 domain-containing protein 2 (696 aa).

The helical transmembrane segment at 13-33 threads the bilayer; the sequence is AQWLALVSLFVAALATVGLYL. The region spanning 51–242 is the SMP-LBD domain; that stretch reads EPGEGPRPGS…PTTVKEAQNL (192 aa). The residue at position 60 (Ser60) is a Phosphoserine. Residues 245 to 362 form the C2 domain; it reads AASTAQESCP…KKQPSGPQSF (118 aa). Phosphoserine is present on residues Ser435 and Ser441. The residue at position 445 (Thr445) is a Phosphothreonine. The interval 539–580 is disordered; sequence VDSTHQEDAPSHPERAAASAPPEEAESAQASLAPKPQEDELD. A compositionally biased stretch (basic and acidic residues) spans 542–553; the sequence is THQEDAPSHPER. Residues 554–572 are compositionally biased toward low complexity; the sequence is AAASAPPEEAESAQASLAP. Ser581 is subject to Phosphoserine.

The protein resides in the membrane. This chain is C2 domain-containing protein 2 (C2CD2), found in Homo sapiens (Human).